The following is a 503-amino-acid chain: Cytochrome P450 6l1 (503 aa).

Residue C438 participates in heme binding.

The protein belongs to the cytochrome P450 family. Heme serves as cofactor. As to expression, detected only in testes and accessory glands of male adults.

Its subcellular location is the endoplasmic reticulum membrane. The protein resides in the microsome membrane. This is Cytochrome P450 6l1 (CYP6L1) from Blattella germanica (German cockroach).